A 123-amino-acid polypeptide reads, in one-letter code: Holo-[acyl-carrier-protein] synthase (123 aa).

Mg(2+) contacts are provided by Asp9 and Glu57.

The protein belongs to the P-Pant transferase superfamily. AcpS family. Requires Mg(2+) as cofactor.

It localises to the cytoplasm. The catalysed reaction is apo-[ACP] + CoA = holo-[ACP] + adenosine 3',5'-bisphosphate + H(+). Transfers the 4'-phosphopantetheine moiety from coenzyme A to a Ser of acyl-carrier-protein. This chain is Holo-[acyl-carrier-protein] synthase, found in Streptomyces coelicolor (strain ATCC BAA-471 / A3(2) / M145).